The following is a 225-amino-acid chain: ATP-dependent Clp protease proteolytic subunit (225 aa).

Ser-123 functions as the Nucleophile in the catalytic mechanism. His-148 is an active-site residue.

It belongs to the peptidase S14 family. In terms of assembly, fourteen ClpP subunits assemble into 2 heptameric rings which stack back to back to give a disk-like structure with a central cavity, resembling the structure of eukaryotic proteasomes.

The protein localises to the cytoplasm. The catalysed reaction is Hydrolysis of proteins to small peptides in the presence of ATP and magnesium. alpha-casein is the usual test substrate. In the absence of ATP, only oligopeptides shorter than five residues are hydrolyzed (such as succinyl-Leu-Tyr-|-NHMec, and Leu-Tyr-Leu-|-Tyr-Trp, in which cleavage of the -Tyr-|-Leu- and -Tyr-|-Trp bonds also occurs).. In terms of biological role, cleaves peptides in various proteins in a process that requires ATP hydrolysis. Has a chymotrypsin-like activity. Plays a major role in the degradation of misfolded proteins. The sequence is that of ATP-dependent Clp protease proteolytic subunit from Chlorobium chlorochromatii (strain CaD3).